Consider the following 262-residue polypeptide: Flap endonuclease Xni (262 aa).

Asp105 is a binding site for Mg(2+). The 88-residue stretch at 164-251 (SQFLDLMALA…NINLKDFRAN (88 aa)) folds into the 5'-3' exonuclease domain. The K(+) site is built by Leu172, Ala173, Pro181, Ile183, and Ile186. The tract at residues 185-190 (GIGPKS) is interaction with DNA.

The protein belongs to the Xni family. The cofactor is Mg(2+). Requires K(+) as cofactor.

Has flap endonuclease activity. During DNA replication, flap endonucleases cleave the 5'-overhanging flap structure that is generated by displacement synthesis when DNA polymerase encounters the 5'-end of a downstream Okazaki fragment. The polypeptide is Flap endonuclease Xni (Shewanella sp. (strain W3-18-1)).